A 445-amino-acid chain; its full sequence is Eukaryotic peptide chain release factor subunit 1 (445 aa).

It belongs to the eukaryotic release factor 1 family. As to quaternary structure, heterodimer of two subunits, one of which binds GTP.

It localises to the cytoplasm. Directs the termination of nascent peptide synthesis (translation) in response to the termination codon UGA. In Stylonchia UAA and UAG codes for glutamine. The polypeptide is Eukaryotic peptide chain release factor subunit 1 (ERF1) (Stylonychia mytilus (Ciliate)).